Here is a 195-residue protein sequence, read N- to C-terminus: Adenylate kinase (195 aa).

10-15 is an ATP binding site; that stretch reads GAGKGT. An NMP region spans residues 30-59; it reads STGDMLRAAVAAGTPVGLKAKAVMDAGGLV. Residues Thr31, Arg36, 57–59, 85–88, and Gln92 contribute to the AMP site; these read GLV and GFPR. The interval 126–143 is LID; it reads NRAAEAQAKGEAVRKDDD. An ATP-binding site is contributed by Arg127. Arg150 lines the AMP pocket. Residue Ala178 participates in ATP binding.

The protein belongs to the adenylate kinase family. As to quaternary structure, monomer.

The protein localises to the cytoplasm. It carries out the reaction AMP + ATP = 2 ADP. The protein operates within purine metabolism; AMP biosynthesis via salvage pathway; AMP from ADP: step 1/1. Functionally, catalyzes the reversible transfer of the terminal phosphate group between ATP and AMP. Plays an important role in cellular energy homeostasis and in adenine nucleotide metabolism. The protein is Adenylate kinase of Xanthobacter autotrophicus (strain ATCC BAA-1158 / Py2).